Here is a 276-residue protein sequence, read N- to C-terminus: NH(3)-dependent NAD(+) synthetase (276 aa).

Residue 43–50 (GISGGVDS) participates in ATP binding. Aspartate 49 lines the Mg(2+) pocket. Position 146 (arginine 146) interacts with deamido-NAD(+). Threonine 166 lines the ATP pocket. Glutamate 171 contacts Mg(2+). Positions 179 and 186 each coordinate deamido-NAD(+). The ATP site is built by lysine 195 and threonine 217. Residue 266–267 (HK) coordinates deamido-NAD(+).

This sequence belongs to the NAD synthetase family. In terms of assembly, homodimer.

The catalysed reaction is deamido-NAD(+) + NH4(+) + ATP = AMP + diphosphate + NAD(+) + H(+). It participates in cofactor biosynthesis; NAD(+) biosynthesis; NAD(+) from deamido-NAD(+) (ammonia route): step 1/1. In terms of biological role, catalyzes the ATP-dependent amidation of deamido-NAD to form NAD. Uses ammonia as a nitrogen source. The sequence is that of NH(3)-dependent NAD(+) synthetase from Shewanella piezotolerans (strain WP3 / JCM 13877).